The chain runs to 345 residues: NADPH dehydrogenase (345 aa).

An FMN-binding site is contributed by Ser23–Cys26. Residue Tyr28 participates in substrate binding. FMN is bound by residues Ala60 and Gln102. His164 to His167 lines the substrate pocket. FMN contacts are provided by residues Arg215 and Gly307 to Arg308.

It belongs to the NADH:flavin oxidoreductase/NADH oxidase family. NamA subfamily. As to quaternary structure, homotetramer. Requires FMN as cofactor.

It carries out the reaction A + NADPH + H(+) = AH2 + NADP(+). Its function is as follows. Catalyzes the reduction of the double bond of an array of alpha,beta-unsaturated aldehydes and ketones. It also reduces the nitro group of nitroester and nitroaromatic compounds. It could have a role in detoxification processes. The polypeptide is NADPH dehydrogenase (Bacillus anthracis (strain CDC 684 / NRRL 3495)).